We begin with the raw amino-acid sequence, 89 residues long: Small ribosomal subunit protein uS14A (89 aa).

This sequence belongs to the universal ribosomal protein uS14 family. As to quaternary structure, part of the 30S ribosomal subunit. Contacts proteins S3 and S10.

Binds 16S rRNA, required for the assembly of 30S particles and may also be responsible for determining the conformation of the 16S rRNA at the A site. The protein is Small ribosomal subunit protein uS14A of Lacticaseibacillus paracasei (strain ATCC 334 / BCRC 17002 / CCUG 31169 / CIP 107868 / KCTC 3260 / NRRL B-441) (Lactobacillus paracasei).